The following is a 159-amino-acid chain: D-aminoacyl-tRNA deacylase (159 aa).

Positions G142 to P143 match the Gly-cisPro motif, important for rejection of L-amino acids motif.

The protein belongs to the DTD family. Homodimer.

Its subcellular location is the cytoplasm. It carries out the reaction glycyl-tRNA(Ala) + H2O = tRNA(Ala) + glycine + H(+). It catalyses the reaction a D-aminoacyl-tRNA + H2O = a tRNA + a D-alpha-amino acid + H(+). An aminoacyl-tRNA editing enzyme that deacylates mischarged D-aminoacyl-tRNAs. Also deacylates mischarged glycyl-tRNA(Ala), protecting cells against glycine mischarging by AlaRS. Acts via tRNA-based rather than protein-based catalysis; rejects L-amino acids rather than detecting D-amino acids in the active site. By recycling D-aminoacyl-tRNA to D-amino acids and free tRNA molecules, this enzyme counteracts the toxicity associated with the formation of D-aminoacyl-tRNA entities in vivo and helps enforce protein L-homochirality. The protein is D-aminoacyl-tRNA deacylase of Albidiferax ferrireducens (strain ATCC BAA-621 / DSM 15236 / T118) (Rhodoferax ferrireducens).